Reading from the N-terminus, the 416-residue chain is Actin-like protein 9 (416 aa).

The segment at 1 to 23 (MDPNQGNPLEPQDSPEIPKPSLN) is disordered.

This sequence belongs to the actin family. Interacts with ACTL7A.

It localises to the cytoplasmic vesicle. The protein localises to the secretory vesicle. It is found in the acrosome. The protein resides in the cytoplasm. Its subcellular location is the cytoskeleton. It localises to the perinuclear theca. Functionally, testis-specic protein that plays an important role in fusion of proacrosomal vesicles and perinuclear theca formation. This Bos taurus (Bovine) protein is Actin-like protein 9 (ACTL9).